The chain runs to 977 residues: MELRAVGFCLALLWGCALAAAAAQGKEVVLLDFAAMKGELGWLTHPYGKGWDLMQNIMDDMPIYMYSVCNVVSGDQDNWLRTNWVYREEAERIFIELKFTVRDCNSFPGGASSCKETFNLYYAESDVDYGTNFQKRQFTKIDTIAPDEITVSSDFEARNVKLNVEERMVGPLTRKGFYLAFQDIGACVALLSVRVYYKKCPEMLQSLARFPETIAVAVSDTQPLATVAGTCVDHAVVPYGGEGPLMHCTVDGEWLVPIGQCLCQEGYEKVEDACRACSPGFFKSEASESPCLECPEHTLPSTEGATSCQCEEGYFRAPEDPLSMSCTRPPSAPNYLTAIGMGAKVELRWTAPKDTGGRQDIVYSVTCEQCWPESGECGPCEASVRYSEPPHALTRTSVTVSDLEPHMNYTFAVEARNGVSGLVTSRSFRTASVSINQTEPPKVRLEDRSTTSLSVTWSIPVSQQSRVWKYEVTYRKKGDANSYNVRRTEGFSVTLDDLAPDTTYLVQVQALTQEGQGAGSKVHEFQTLSTEGSANMAVIGGVAVGVVLLLVLAGVGLFIHRRRRNLRARQSSEDVRFSKSEQLKPLKTYVDPHTYEDPNQAVLKFTTEIHPSCVARQKVIGAGEFGEVYKGTLKASSGKKEIPVAIKTLKAGYTEKQRVDFLSEASIMGQFSHHNIIRLEGVVSKYKPMMIITEYMENGALDKFLREKDGEFSVLQLVGMLRGIASGMKYLANMNYVHRDLAARNILVNSNLVCKVSDFGLSRVLEDDPEATYTTSGGKIPIRWTAPEAISYRKFTSASDVWSYGIVMWEVMTYGERPYWELSNHEVMKAINDGFRLPTPMDCPSAIYQLMMQCWQQERSRRPKFADIVSILDKLIRAPDSLKTLADFDPRVSIRLPSTSGSEGVPFRTVSEWLESIKMQQYTEHFMVAGYTAIEKVVQMSNEDIKRIGVRLPGHQKRIAYSLLGLKDQVNTVGIPI.

Residues Met-1–Gly-25 form the signal peptide. Positions Met-1–Gln-205 are mediates interaction with CLDN4. Residues Lys-26 to Val-538 are Extracellular-facing. One can recognise an Eph LBD domain in the interval Glu-27–Gln-205. 2 disulfides stabilise this stretch: Cys-69-Cys-187 and Cys-104-Cys-114. Positions Pro-329–Val-433 constitute a Fibronectin type-III 1 domain. Asn-408 and Asn-436 each carry an N-linked (GlcNAc...) asparagine glycan. Residues Glu-439 to Thr-530 form the Fibronectin type-III 2 domain. Residues Ile-539 to Ile-559 traverse the membrane as a helical segment. At His-560–Ile-977 the chain is on the cytoplasmic side. Phosphoserine is present on residues Ser-571 and Ser-580. Phosphotyrosine; by autocatalysis is present on residues Tyr-589 and Tyr-595. The tract at residues Thr-607–Phe-907 is mediates interaction with ARHGEF16. Residues Val-614–Ile-876 enclose the Protein kinase domain. Ile-620–Val-628 contributes to the ATP binding site. Tyr-629 bears the Phosphotyrosine mark. Lys-647 contacts ATP. Thr-648 carries the phosphothreonine modification. Residue Tyr-736 is modified to Phosphotyrosine; by autocatalysis. Asp-740 functions as the Proton acceptor in the catalytic mechanism. At Tyr-773 the chain carries Phosphotyrosine; by autocatalysis. Ser-870, Ser-893, Ser-898, and Ser-902 each carry phosphoserine. The segment at Asp-887 to Ile-977 is negatively regulates interaction with ARHGEF16. The region spanning Val-905–Gln-969 is the SAM domain. Tyr-922 bears the Phosphotyrosine; by autocatalysis mark. Phosphotyrosine is present on Tyr-931. Residues Ile-975–Ile-977 carry the PDZ-binding motif.

Belongs to the protein kinase superfamily. Tyr protein kinase family. Ephrin receptor subfamily. As to quaternary structure, homodimer. Interacts with INPPL1; regulates activated EPHA2 endocytosis and degradation. Interacts (inactivated form) with PTK2/FAK1 and interacts (EFNA1 ligand-activated form) with PTPN11; regulates integrin-mediated adhesion. Interacts with ARHGEF16, DOCK4 and ELMO2; mediates ligand-independent activation of RAC1 which stimulates cell migration. Interacts with CLDN4; phosphorylates CLDN4 and may regulate tight junctions. Interacts with ACP1. Interacts with CEMIP. Interacts with NCK1; may regulate EPHA2 activity in cell migration and adhesion. Interacts with SLA. Interacts (phosphorylated form) with VAV2, VAV3 and PI3-kinase p85 subunit (PIK3R1, PIK3R2 or PIK3R3); critical for the EFNA1-induced activation of RAC1 which stimulates cell migration. Interacts with ANKS1A. Interacts with TIMD4. In terms of processing, autophosphorylates. Phosphorylated at Ser-898 by PKB; serum-induced phosphorylation which targets EPHA2 to the cell leading edge and stimulates cell migration. Phosphorylation by PKB is inhibited by EFNA1-activated EPHA2 which regulates PKB activity via a reciprocal regulatory loop. Phosphorylated on tyrosine upon binding and activation by EFNA1. Phosphorylated residues Tyr-589 and Tyr-595 are required for binding VAV2 and VAV3 while phosphorylated residues Tyr-736 and Tyr-931 are required for binding PI3-kinase p85 subunit (PIK3R1, PIK3R2 or PIK3R3). These phosphorylated residues are critical for recruitment of VAV2 and VAV3 and PI3-kinase p85 subunit which transduce downstream signaling to activate RAC1 GTPase and cell migration. Dephosphorylation of Tyr-931 by PTPRF prevents the interaction of EPHA2 with NCK1. Phosphorylated at Ser-898 in response to TNF by RPS6KA1 and RPS6KA3; RPS6KA-EPHA2 signaling pathway controls cell migration. Phosphorylated at Ser-898 by PKA; blocks cell retraction induced by EPHA2 kinase activity. Dephosphorylated by ACP1. Post-translationally, ubiquitinated by CHIP/STUB1. Ubiquitination is regulated by the HSP90 chaperone and regulates the receptor stability and activity through proteasomal degradation. ANKS1A prevents ubiquitination and degradation. As to expression, expressed in the lung, intestine and liver. Expressed in myogenic progenitor cells.

It is found in the cell membrane. The protein localises to the cell projection. The protein resides in the ruffle membrane. It localises to the lamellipodium membrane. Its subcellular location is the cell junction. It is found in the focal adhesion. It carries out the reaction L-tyrosyl-[protein] + ATP = O-phospho-L-tyrosyl-[protein] + ADP + H(+). Receptor tyrosine kinase which binds promiscuously membrane-bound ephrin-A family ligands residing on adjacent cells, leading to contact-dependent bidirectional signaling into neighboring cells. The signaling pathway downstream of the receptor is referred to as forward signaling while the signaling pathway downstream of the ephrin ligand is referred to as reverse signaling. Activated by the ligand ephrin-A1/EFNA1 regulates migration, integrin-mediated adhesion, proliferation and differentiation of cells. Regulates cell adhesion and differentiation through DSG1/desmoglein-1 and inhibition of the ERK1/ERK2 signaling pathway. May also participate in UV radiation-induced apoptosis and have a ligand-independent stimulatory effect on chemotactic cell migration. During development, may function in distinctive aspects of pattern formation and subsequently in development of several fetal tissues. Involved for instance in angiogenesis, in early hindbrain development and epithelial proliferation and branching morphogenesis during mammary gland development. Engaged by the ligand ephrin-A5/EFNA5 may regulate lens fiber cells shape and interactions and be important for lens transparency development and maintenance. With ephrin-A2/EFNA2 may play a role in bone remodeling through regulation of osteoclastogenesis and osteoblastogenesis. The chain is Ephrin type-A receptor 2 (Epha2) from Mus musculus (Mouse).